A 157-amino-acid polypeptide reads, in one-letter code: Small ribosomal subunit protein uS7 (157 aa).

This sequence belongs to the universal ribosomal protein uS7 family. Part of the 30S ribosomal subunit. Contacts proteins S9 and S11.

Its function is as follows. One of the primary rRNA binding proteins, it binds directly to 16S rRNA where it nucleates assembly of the head domain of the 30S subunit. Is located at the subunit interface close to the decoding center, probably blocks exit of the E-site tRNA. The protein is Small ribosomal subunit protein uS7 of Acidovorax ebreus (strain TPSY) (Diaphorobacter sp. (strain TPSY)).